Here is a 324-residue protein sequence, read N- to C-terminus: tRNA uridine(34) hydroxylase (324 aa).

A Rhodanese domain is found at 122-218 (QENRCLILDV…YGQQVGTGKW (97 aa)). Residue cysteine 178 is the Cysteine persulfide intermediate of the active site.

The protein belongs to the TrhO family.

It carries out the reaction uridine(34) in tRNA + AH2 + O2 = 5-hydroxyuridine(34) in tRNA + A + H2O. Functionally, catalyzes oxygen-dependent 5-hydroxyuridine (ho5U) modification at position 34 in tRNAs. This Chlamydia pneumoniae (Chlamydophila pneumoniae) protein is tRNA uridine(34) hydroxylase.